The sequence spans 690 residues: MNLEGKTFYLLEENGTSEYPLYKIIDKTYILSNIKDIVAHIVKCDYDDDYTDDEAEDVSEGVVEKTTITEIQLDFSNPKFVVNNFIPDENQAANGIYYTNSIIKIGEHDIYDENFLIELIEESSQSKVFPENTCNLYRFGLNSGKFNLCDVLIQKGIEYKCTDHNYGRPLIVLYPDNGEIEEIYLYLLKNMEHFKDDFVKIIQAVTEDSYEFDVLKSYIEYAQCTNIPINYLEISINIIKIHHKTECIKLFIEMGLVNAQDIFYESCLHFSDLTGYLVDQGVEFNFSDVFSLDLPLDTLEYFTEKGFEPTDEMIVNKLNDSNKSTPKINNDSSSFGTIMIMTPDYSFTRYKPPYYSILIDFLLNNKYLKSHHINQNVIDKLIEESSLIELVKLDKEFDIKSYIDLNILIKEAIDSDIWFVVKHCIENGINIDDCMSYALDKSMMYIVKKLKKLGAIVPDNFIELDKINIDDQEHIQMCINKGMDITTIYNEIILNGSHKTLKYIANQMIQQGLKLPKITNSLIYFKYQKYIKCDKHIKVIRNLNIDFTPIQQVVLAINDCDIETAKYLIGQYQIHDNLKILFMSVISQNIEFTKYLIEVNNFDKTYTGWALVLSTYNYEMFRSVLDYTGIDVNTRQQEIILMVNPNDVNVDDTIDYLHLMGYPNIFKTIDLISKDDKPIYKFLKKFNIEI.

This is an uncharacterized protein from Acanthamoeba polyphaga mimivirus (APMV).